The primary structure comprises 209 residues: Putative BTB/POZ domain-containing protein At2g40450 (209 aa).

Residues 24–98 (ADVRLKAGDS…IYRVDGSICS (75 aa)) form the BTB domain.

The protein operates within protein modification; protein ubiquitination. In terms of biological role, may act as a substrate-specific adapter of an E3 ubiquitin-protein ligase complex (CUL3-RBX1-BTB) which mediates the ubiquitination and subsequent proteasomal degradation of target proteins. The sequence is that of Putative BTB/POZ domain-containing protein At2g40450 from Arabidopsis thaliana (Mouse-ear cress).